The chain runs to 365 residues: 4-hydroxy-3-methylbut-2-en-1-yl diphosphate synthase (flavodoxin) (365 aa).

[4Fe-4S] cluster contacts are provided by C265, C268, C300, and E307.

Belongs to the IspG family. The cofactor is [4Fe-4S] cluster.

It catalyses the reaction (2E)-4-hydroxy-3-methylbut-2-enyl diphosphate + oxidized [flavodoxin] + H2O + 2 H(+) = 2-C-methyl-D-erythritol 2,4-cyclic diphosphate + reduced [flavodoxin]. It functions in the pathway isoprenoid biosynthesis; isopentenyl diphosphate biosynthesis via DXP pathway; isopentenyl diphosphate from 1-deoxy-D-xylulose 5-phosphate: step 5/6. Its function is as follows. Converts 2C-methyl-D-erythritol 2,4-cyclodiphosphate (ME-2,4cPP) into 1-hydroxy-2-methyl-2-(E)-butenyl 4-diphosphate. In Bacillus mycoides (strain KBAB4) (Bacillus weihenstephanensis), this protein is 4-hydroxy-3-methylbut-2-en-1-yl diphosphate synthase (flavodoxin).